A 194-amino-acid chain; its full sequence is Peptidyl-tRNA hydrolase (194 aa).

Y17 provides a ligand contact to tRNA. H22 acts as the Proton acceptor in catalysis. TRNA is bound by residues Y69, N71, and N117.

This sequence belongs to the PTH family. Monomer.

It localises to the cytoplasm. The catalysed reaction is an N-acyl-L-alpha-aminoacyl-tRNA + H2O = an N-acyl-L-amino acid + a tRNA + H(+). Hydrolyzes ribosome-free peptidyl-tRNAs (with 1 or more amino acids incorporated), which drop off the ribosome during protein synthesis, or as a result of ribosome stalling. Functionally, catalyzes the release of premature peptidyl moieties from peptidyl-tRNA molecules trapped in stalled 50S ribosomal subunits, and thus maintains levels of free tRNAs and 50S ribosomes. The chain is Peptidyl-tRNA hydrolase from Paenarthrobacter aurescens (strain TC1).